The primary structure comprises 386 residues: Cytochrome b (386 aa).

4 helical membrane passes run 39 to 59 (FGSL…FLAM), 83 to 104 (FMLK…YIHM), 119 to 139 (WNIG…GYVL), and 184 to 204 (FFSL…LHIL). The heme b site is built by histidine 89 and histidine 103. Heme b contacts are provided by histidine 188 and histidine 202. Histidine 207 is an a ubiquinone binding site. Transmembrane regions (helical) follow at residues 232–252 (YKDL…CYFM), 294–314 (LGGV…PFIH), 326–346 (LGKI…WLGA), and 353–374 (YIMI…LVPL).

Belongs to the cytochrome b family. As to quaternary structure, the main subunits of complex b-c1 are: cytochrome b, cytochrome c1 and the Rieske protein. Heme b is required as a cofactor.

The protein resides in the mitochondrion inner membrane. Its function is as follows. Component of the ubiquinol-cytochrome c reductase complex (complex III or cytochrome b-c1 complex) that is part of the mitochondrial respiratory chain. The b-c1 complex mediates electron transfer from ubiquinol to cytochrome c. Contributes to the generation of a proton gradient across the mitochondrial membrane that is then used for ATP synthesis. This chain is Cytochrome b (MT-CYB), found in Sarcophyton glaucum (Toadstool umbrella leather coral).